The following is a 144-amino-acid chain: MLMPKRVKYRKQQRGRIKGNATRGNTLTYGEYGLQALEPGWITATQIEAARVAMTRFIKRGGKVWIKIFPDKPVTKKPAETRMGSGKGSPEFWVAVVKPGRVLFEIAGVSEEVAKEALRLAMHKLPIKTKFLKREELGGEDNEG.

It belongs to the universal ribosomal protein uL16 family. In terms of assembly, part of the 50S ribosomal subunit.

In terms of biological role, binds 23S rRNA and is also seen to make contacts with the A and possibly P site tRNAs. This chain is Large ribosomal subunit protein uL16, found in Thermoanaerobacter pseudethanolicus (strain ATCC 33223 / 39E) (Clostridium thermohydrosulfuricum).